The primary structure comprises 376 residues: UDP-N-acetylglucosamine 2-epimerase (376 aa).

Substrate-binding positions include Arg10, Lys15, Asp95, Glu117, His213, Gln271, Phe276, 290-292 (SGG), Glu296, and Arg313.

This sequence belongs to the UDP-N-acetylglucosamine 2-epimerase family. As to quaternary structure, homodimer.

Its subcellular location is the cytoplasm. It carries out the reaction UDP-N-acetyl-alpha-D-glucosamine = UDP-N-acetyl-alpha-D-mannosamine. Its pathway is bacterial outer membrane biogenesis; enterobacterial common antigen biosynthesis. Functionally, catalyzes the reversible epimerization at C-2 of UDP-N-acetylglucosamine (UDP-GlcNAc) and thereby provides bacteria with UDP-N-acetylmannosamine (UDP-ManNAc), the activated donor of ManNAc residues. This is UDP-N-acetylglucosamine 2-epimerase from Escherichia coli O157:H7.